An 85-amino-acid chain; its full sequence is MRKYNPRKIKNKVNIPIVLHKANSTIPFVQGTVDYKNVALLRKYISAEGKILSRRLTRLTSKQQRHISTAIKTARIAGLLPFINQ.

Belongs to the bacterial ribosomal protein bS18 family. In terms of assembly, part of the 30S ribosomal subunit.

It is found in the plastid. It localises to the chloroplast. The polypeptide is Small ribosomal subunit protein bS18c (Tupiella akineta (Green alga)).